A 61-amino-acid chain; its full sequence is Cytotoxin 3 (61 aa).

4 disulfides stabilise this stretch: C3–C22, C15–C39, C43–C54, and C55–C60.

The protein belongs to the three-finger toxin family. Short-chain subfamily. Type IB cytotoxin sub-subfamily. Expressed by the venom gland.

It is found in the secreted. Functionally, this protein lyses red blood cells and has cardiotoxic and hypotensive activities. This Hemachatus haemachatus (Rinkhals) protein is Cytotoxin 3.